The sequence spans 484 residues: Chromosomal replication initiator protein DnaA (484 aa).

Residues 1–73 (MQEGKNIWSL…EILTEKGHNT (73 aa)) form a domain I, interacts with DnaA modulators region. The tract at residues 73–140 (TINVEFINPP…EDIHTKYRNP (68 aa)) is domain II. The domain III, AAA+ region stretch occupies residues 141-357 (FLKKKYTFEN…AAVTKLKAHI (217 aa)). Residues Gly185, Gly187, Lys188, and Thr189 each coordinate ATP. The domain IV, binds dsDNA stretch occupies residues 358–484 (DLEDIEIDTS…IELMNKINKN (127 aa)).

Belongs to the DnaA family. In terms of assembly, oligomerizes as a right-handed, spiral filament on DNA at oriC.

It localises to the cytoplasm. In terms of biological role, plays an essential role in the initiation and regulation of chromosomal replication. ATP-DnaA binds to the origin of replication (oriC) to initiate formation of the DNA replication initiation complex once per cell cycle. Binds the DnaA box (a 9 base pair repeat at the origin) and separates the double-stranded (ds)DNA. Forms a right-handed helical filament on oriC DNA; dsDNA binds to the exterior of the filament while single-stranded (ss)DNA is stabiized in the filament's interior. The ATP-DnaA-oriC complex binds and stabilizes one strand of the AT-rich DNA unwinding element (DUE), permitting loading of DNA polymerase. After initiation quickly degrades to an ADP-DnaA complex that is not apt for DNA replication. Binds acidic phospholipids. This Borrelia turicatae (strain 91E135) protein is Chromosomal replication initiator protein DnaA.